A 364-amino-acid chain; its full sequence is Fructose-bisphosphate aldolase B (364 aa).

Position 2 is an N-acetylalanine (Ala2). At Lys13 the chain carries N6-succinyllysine. Ser36 carries the post-translational modification Phosphoserine. A Phosphothreonine modification is found at Thr39. Arg43 contributes to the beta-D-fructose 1,6-bisphosphate binding site. Ser89 bears the Phosphoserine mark. Position 119 is a phosphothreonine (Thr119). Lys121 is modified (N6-succinyllysine). Phosphoserine is present on Ser132. Glu188 functions as the Proton acceptor in the catalytic mechanism. Ser206 bears the Phosphoserine mark. Lys230 functions as the Schiff-base intermediate with dihydroxyacetone-P in the catalytic mechanism. Phosphoserine is present on residues Ser272, Ser276, Ser299, and Ser301. Position 272 to 274 (272 to 274) interacts with beta-D-fructose 1,6-bisphosphate; that stretch reads SGG. Arg304 is a beta-D-fructose 1,6-bisphosphate binding site. At Ser309 the chain carries Phosphoserine. Position 317 is an N6-succinyllysine (Lys317).

Belongs to the class I fructose-bisphosphate aldolase family. Homotetramer. Interacts with BBS1, BBS2, BBS4 and BBS7. Forms a ternary complex with G6PD and TP53; this interaction is direct.

Its subcellular location is the cytoplasm. The protein localises to the cytosol. It localises to the cytoskeleton. The protein resides in the microtubule organizing center. It is found in the centrosome. Its subcellular location is the centriolar satellite. It catalyses the reaction beta-D-fructose 1,6-bisphosphate = D-glyceraldehyde 3-phosphate + dihydroxyacetone phosphate. The enzyme catalyses beta-D-fructose 1-phosphate = D-glyceraldehyde + dihydroxyacetone phosphate. Its pathway is carbohydrate degradation; glycolysis; D-glyceraldehyde 3-phosphate and glycerone phosphate from D-glucose: step 4/4. It participates in carbohydrate biosynthesis; gluconeogenesis. It functions in the pathway carbohydrate metabolism; fructose metabolism. Functionally, catalyzes the aldol cleavage of fructose 1,6-biphosphate to form two triosephosphates dihydroxyacetone phosphate and D-glyceraldehyde 3-phosphate in glycolysis as well as the reverse stereospecific aldol addition reaction in gluconeogenesis. In fructolysis, metabolizes fructose 1-phosphate derived from the phosphorylation of dietary fructose by fructokinase into dihydroxyacetone phosphate and D-glyceraldehyde. Acts as an adapter independently of its enzymatic activity, exerts a tumor suppressor role by stabilizing the ternary complex with G6PD and TP53 to inhibit G6PD activity and keep oxidative pentose phosphate metabolism in check. In Mus musculus (Mouse), this protein is Fructose-bisphosphate aldolase B.